Consider the following 214-residue polypeptide: Probable transaldolase 1 (214 aa).

Lysine 83 functions as the Schiff-base intermediate with substrate in the catalytic mechanism.

It belongs to the transaldolase family. Type 3B subfamily.

The protein localises to the cytoplasm. It catalyses the reaction D-sedoheptulose 7-phosphate + D-glyceraldehyde 3-phosphate = D-erythrose 4-phosphate + beta-D-fructose 6-phosphate. It participates in carbohydrate degradation; pentose phosphate pathway; D-glyceraldehyde 3-phosphate and beta-D-fructose 6-phosphate from D-ribose 5-phosphate and D-xylulose 5-phosphate (non-oxidative stage): step 2/3. Functionally, transaldolase is important for the balance of metabolites in the pentose-phosphate pathway. This is Probable transaldolase 1 from Listeria monocytogenes serotype 4b (strain F2365).